A 302-amino-acid chain; its full sequence is Homoserine O-acetyltransferase (302 aa).

The active-site Acyl-thioester intermediate is C142. Residues K163 and S192 each coordinate substrate. H235 functions as the Proton acceptor in the catalytic mechanism. E237 is a catalytic residue. Position 249 (R249) interacts with substrate.

This sequence belongs to the MetA family.

Its subcellular location is the cytoplasm. The enzyme catalyses L-homoserine + acetyl-CoA = O-acetyl-L-homoserine + CoA. It participates in amino-acid biosynthesis; L-methionine biosynthesis via de novo pathway; O-acetyl-L-homoserine from L-homoserine: step 1/1. Functionally, transfers an acetyl group from acetyl-CoA to L-homoserine, forming acetyl-L-homoserine. The protein is Homoserine O-acetyltransferase of Bacillus licheniformis (strain ATCC 14580 / DSM 13 / JCM 2505 / CCUG 7422 / NBRC 12200 / NCIMB 9375 / NCTC 10341 / NRRL NRS-1264 / Gibson 46).